A 423-amino-acid polypeptide reads, in one-letter code: Acaloleptin A (423 aa).

An N-terminal signal peptide occupies residues 1 to 17 (MITKISLILFAVLLVSG). Positions 18–26 (LEEEERWKR) are excised as a propeptide. Disordered regions lie at residues 28 to 58 (LQPG…NTKT), 108 to 128 (INNK…DNGN), 180 to 203 (NVNN…GNTR), and 355 to 385 (SDDE…TRAD). A compositionally biased stretch (polar residues) spans 34-43 (NVNNNDQPWQ). Residues 180–189 (NVNNKDQPWQ) show a composition bias toward polar residues. Residues 357–366 (DEDEEEEEDQ) are compositionally biased toward acidic residues. A compositionally biased stretch (basic and acidic residues) spans 376 to 385 (RGDDGNTRAD).

Belongs to the coleoptericin family. As to expression, hemolymph (at protein level). Larval fat body.

The protein resides in the secreted. Functionally, acaloleptins A1-A4 show antibacterial activity against Gram-negative bacteria but not against Gram-positive bacteria. Acaloleptin A5 shows antibacterial activity against Gram-positive bacteria but not against Gram-negative bacteria, and may also have antifungal activity. The sequence is that of Acaloleptin A from Acalolepta luxuriosa (Udo longhorn beetle).